The sequence spans 441 residues: Serine--tRNA ligase (441 aa).

250 to 252 is an L-serine binding site; it reads TSE. ATP-binding positions include 281-283 and V297; that span reads RRE. Position 304 (E304) interacts with L-serine. 368-371 is an ATP binding site; the sequence is EIVS. T402 serves as a coordination point for L-serine.

Belongs to the class-II aminoacyl-tRNA synthetase family. Type-1 seryl-tRNA synthetase subfamily. Homodimer. The tRNA molecule binds across the dimer.

It is found in the cytoplasm. The catalysed reaction is tRNA(Ser) + L-serine + ATP = L-seryl-tRNA(Ser) + AMP + diphosphate + H(+). It carries out the reaction tRNA(Sec) + L-serine + ATP = L-seryl-tRNA(Sec) + AMP + diphosphate + H(+). The protein operates within aminoacyl-tRNA biosynthesis; selenocysteinyl-tRNA(Sec) biosynthesis; L-seryl-tRNA(Sec) from L-serine and tRNA(Sec): step 1/1. Functionally, catalyzes the attachment of serine to tRNA(Ser). Is also able to aminoacylate tRNA(Sec) with serine, to form the misacylated tRNA L-seryl-tRNA(Sec), which will be further converted into selenocysteinyl-tRNA(Sec). The sequence is that of Serine--tRNA ligase from Thermoplasma volcanium (strain ATCC 51530 / DSM 4299 / JCM 9571 / NBRC 15438 / GSS1).